The chain runs to 366 residues: Flagellar P-ring protein (366 aa).

The N-terminal stretch at 1–20 (MVIKFLSALILLLVTTAAQA) is a signal peptide.

Belongs to the FlgI family. In terms of assembly, the basal body constitutes a major portion of the flagellar organelle and consists of four rings (L,P,S, and M) mounted on a central rod.

The protein resides in the periplasm. Its subcellular location is the bacterial flagellum basal body. Its function is as follows. Assembles around the rod to form the L-ring and probably protects the motor/basal body from shearing forces during rotation. In Escherichia coli (strain UTI89 / UPEC), this protein is Flagellar P-ring protein.